Consider the following 358-residue polypeptide: Cytoplasmic dynein 2 light intermediate chain 1 (358 aa).

Disordered stretches follow at residues 1-35 (MPKVSSDTLWDIAAAEVRSRESRTDEEEAEEEDAH) and 307-358 (ESTR…ALDP). The segment covering 24–33 (TDEEEAEEED) has biased composition (acidic residues). 2 stretches are compositionally biased toward basic and acidic residues: residues 307–320 (ESTRERKELKDPVK) and 333–349 (RAQKDQELDQYKREQAK).

It belongs to the dynein light intermediate chain family. In terms of assembly, light intermediate chain of the cytoplasmic dynein complex 2, a multisubunit complex composed at least of eleven different proteins. The cytoplasmic dynein 2 complex consists of two catalytic heavy chains (HCs) and a number of non-catalytic subunits presented by intermediate chains (ICs), light intermediate chains (LICs) and light chains (LCs). Among them, a heavy chain (DYNC2H1), two intermediate chains (DYNC2I2 and DYNC2I1), a light intermediate chain (DYNC2LI1), and a light chain (DYNLT2B) are unique to the dynein-2 complex, but a subset of light chains are also shared by dynein-1 and dynein-2 complexes. Dynein-2 complex is built around two copies of cytoplasmic dynein 2 heavy chain 1 (DYNC2H1). The C-terminal region forms the motor domain, which converts the energy from ATP hydrolysis into movement. Its N-terminal region forms the tail, an extended structure that binds the other subunits and holds the two heavy chains in a homodimer.

The protein localises to the cytoplasm. It is found in the cell projection. The protein resides in the cilium. Its subcellular location is the cytoskeleton. It localises to the cilium basal body. The protein localises to the cilium axoneme. It is found in the microtubule organizing center. The protein resides in the centrosome. Acts as one of several non-catalytic accessory components of the cytoplasmic dynein 2 complex (dynein-2 complex), a motor protein complex that drives the movement of cargos along microtubules within cilia and flagella in concert with the intraflagellar transport (IFT) system, facilitating the assembly of these organelles. This is Cytoplasmic dynein 2 light intermediate chain 1 (dync2li1) from Danio rerio (Zebrafish).